Consider the following 504-residue polypeptide: uncharacterized protein (504 aa).

The interval threonine 36 to aspartate 60 is disordered. Residues glutamine 125–arginine 309 enclose the Integrase catalytic domain.

This is an uncharacterized protein from Sinorhizobium fredii (strain NBRC 101917 / NGR234).